The primary structure comprises 199 residues: MMQHLRPALVMTAALCLITGIIYPGLITGAAQLLFPAQANGSLIERDGRVVGSALIGQRFTTPNYFHGRPSAAGADGYDAMASGGSNKGPTDSTLAARIAERVDSVVVDGGVRGRIPADLVTASGSGLDPDISPASAALQVARVAQARELPAATVTLLVAQHTTPRQLGVLGEPRVNVLRLNLALDSLSATSPSVRSVR.

The chain crosses the membrane as a helical span at residues 7–27 (PALVMTAALCLITGIIYPGLI).

Belongs to the KdpC family. In terms of assembly, the system is composed of three essential subunits: KdpA, KdpB and KdpC.

Its subcellular location is the cell inner membrane. In terms of biological role, part of the high-affinity ATP-driven potassium transport (or Kdp) system, which catalyzes the hydrolysis of ATP coupled with the electrogenic transport of potassium into the cytoplasm. This subunit acts as a catalytic chaperone that increases the ATP-binding affinity of the ATP-hydrolyzing subunit KdpB by the formation of a transient KdpB/KdpC/ATP ternary complex. The polypeptide is Potassium-transporting ATPase KdpC subunit (Gemmatimonas aurantiaca (strain DSM 14586 / JCM 11422 / NBRC 100505 / T-27)).